The following is a 1471-amino-acid chain: Myosin-4 (1471 aa).

One can recognise a Myosin N-terminal SH3-like domain in the interval 4–57 (EVGTKCWYPHKEQGWIGGEVTKNDFFEGTFHLELKLEDGETVSIETNSFENDDD). The Myosin motor domain occupies 71-777 (ESTDDLTTLS…MLAFLEKLRT (707 aa)). Residue 165–172 (GESGAGKT) participates in ATP binding. Residues 647-669 (LGELMAIINSTNVHYIRCIKPNS) form an actin-binding region. 5 consecutive IQ domains span residues 781–801 (NEIC…LQYL), 804–824 (MESI…TRVD), 829–849 (TRAA…EYYR), 876–898 (MLMA…DYRT), and 899–928 (LKRS…EVEE). A coiled-coil region spans residues 938 to 1063 (GLLEEAIEFK…LAFIENVIAQ (126 aa)). The Dilute domain occupies 1164–1419 (SKVLLTVESI…LNYLANVIKR (256 aa)).

The protein belongs to the TRAFAC class myosin-kinesin ATPase superfamily. Myosin family. As to quaternary structure, interacts with SHE2 and SHE3.

The protein resides in the bud. Its function is as follows. Part of the mRNA localization machinery that restricts accumulation of certain proteins to the bud and in the daughter cell. Recruited to specific mRNAs including the ASH1 mRNA, coding for a repressor of the HO endonuclease, via its interaction with SHE3. This Saccharomyces cerevisiae (strain ATCC 204508 / S288c) (Baker's yeast) protein is Myosin-4 (MYO4).